A 513-amino-acid chain; its full sequence is uncharacterized protein (513 aa).

A compositionally biased stretch (basic and acidic residues) spans 1-16 (MPREHDSKYHRERDMR). The segment at 1-21 (MPREHDSKYHRERDMRSGLQE) is disordered.

This is an uncharacterized protein from Sinorhizobium fredii (strain NBRC 101917 / NGR234).